The chain runs to 367 residues: Probable peptidoglycan glycosyltransferase FtsW (367 aa).

9 helical membrane-spanning segments follow: residues leucine 32–phenylalanine 52, alanine 57–glycine 77, isoleucine 87–phenylalanine 107, isoleucine 119–leucine 139, methionine 149–phenylalanine 169, leucine 171–methionine 191, valine 251–leucine 271, glycine 296–phenylalanine 316, and leucine 323–leucine 343.

This sequence belongs to the SEDS family. FtsW subfamily.

Its subcellular location is the cell inner membrane. The catalysed reaction is [GlcNAc-(1-&gt;4)-Mur2Ac(oyl-L-Ala-gamma-D-Glu-L-Lys-D-Ala-D-Ala)](n)-di-trans,octa-cis-undecaprenyl diphosphate + beta-D-GlcNAc-(1-&gt;4)-Mur2Ac(oyl-L-Ala-gamma-D-Glu-L-Lys-D-Ala-D-Ala)-di-trans,octa-cis-undecaprenyl diphosphate = [GlcNAc-(1-&gt;4)-Mur2Ac(oyl-L-Ala-gamma-D-Glu-L-Lys-D-Ala-D-Ala)](n+1)-di-trans,octa-cis-undecaprenyl diphosphate + di-trans,octa-cis-undecaprenyl diphosphate + H(+). It participates in cell wall biogenesis; peptidoglycan biosynthesis. In terms of biological role, peptidoglycan polymerase that is essential for cell division. In Taylorella equigenitalis (strain MCE9), this protein is Probable peptidoglycan glycosyltransferase FtsW.